Consider the following 160-residue polypeptide: Transcription elongation factor GreA (160 aa).

Residues 3–84 (SIVNDKILLT…SKAKIIKADL (82 aa)) adopt a coiled-coil conformation.

It belongs to the GreA/GreB family.

Its function is as follows. Necessary for efficient RNA polymerase transcription elongation past template-encoded arresting sites. The arresting sites in DNA have the property of trapping a certain fraction of elongating RNA polymerases that pass through, resulting in locked ternary complexes. Cleavage of the nascent transcript by cleavage factors such as GreA or GreB allows the resumption of elongation from the new 3'terminus. GreA releases sequences of 2 to 3 nucleotides. The polypeptide is Transcription elongation factor GreA (Mesomycoplasma hyopneumoniae (strain 7448) (Mycoplasma hyopneumoniae)).